Reading from the N-terminus, the 471-residue chain is Putative multidrug resistance protein MdtD (471 aa).

At 1–11 (MTDLPDSTRWQ) the chain is on the periplasmic side. The helical transmembrane segment at 12–32 (LWIVAFGFFMQSLDTTIVNTA) threads the bilayer. Residues 33-48 (LPSMAQSLGESPLHMH) are Cytoplasmic-facing. Residues 49–69 (MVIVSYVLTVAVMLPASGWLA) traverse the membrane as a helical segment. Over 70–76 (DKVGVRN) the chain is Periplasmic. A helical membrane pass occupies residues 77-97 (IFFTAIVLFTLGSLFCALSGT). At 98–101 (LNEL) the chain is on the cytoplasmic side. Residues 102–124 (LLARALQGVGGAMMVPVGRLTVM) traverse the membrane as a helical segment. Residues 125-137 (KIVPREQYMAAMT) are Periplasmic-facing. The chain crosses the membrane as a helical span at residues 138-158 (FVTLPGQVGPLLGPALGGLLV). The Cytoplasmic portion of the chain corresponds to 159–164 (EYASWH). Residues 165–185 (WIFLINIPVGIIGAIATLMLM) traverse the membrane as a helical segment. Over 186-196 (PNYTMQTRRFD) the chain is Periplasmic. Residues 197–217 (LSGFLLLAVGMAVLTLALDGS) traverse the membrane as a helical segment. Over 218 to 224 (KGTGLSP) the chain is Cytoplasmic. A helical transmembrane segment spans residues 225-245 (LAIAGLVAVGVVALVLYLLHA). The Periplasmic segment spans residues 246 to 262 (RNNNRALFSLKLFRTRT). Residues 263-283 (FSLGLAGSFAGRIGSGMLPFM) form a helical membrane-spanning segment. Topologically, residues 284–285 (TP) are cytoplasmic. A helical membrane pass occupies residues 286–306 (VFLQIGLGFSPFHAGLMMIPM). The Periplasmic portion of the chain corresponds to 307–341 (VLGSMGMKRIVVQVVNRFGYRRVLVATTLGLSLVT). A helical transmembrane segment spans residues 342–362 (LLFMTTALLGWYYVLPFVLFL). Topologically, residues 363–395 (QGMVNSTRFSSMNTLTLKDLPDNLASSGNSLLS) are cytoplasmic. A helical transmembrane segment spans residues 396 to 416 (MIMQLSMSIGVTIAGLLLGLF). Topologically, residues 417 to 430 (GSQHVSVDSGTTQT) are periplasmic. Residues 431-451 (VFMYTWLSMAFIIALPAFIFA) traverse the membrane as a helical segment. Residues 452 to 471 (RVPNDTHQNVAISRRKRSAQ) lie on the Cytoplasmic side of the membrane.

This sequence belongs to the major facilitator superfamily. TCR/Tet family.

Its subcellular location is the cell inner membrane. The protein is Putative multidrug resistance protein MdtD of Escherichia coli (strain SMS-3-5 / SECEC).